The primary structure comprises 679 residues: Glycine--tRNA ligase beta subunit (679 aa).

The protein belongs to the class-II aminoacyl-tRNA synthetase family. In terms of assembly, tetramer of two alpha and two beta subunits.

It is found in the cytoplasm. It catalyses the reaction tRNA(Gly) + glycine + ATP = glycyl-tRNA(Gly) + AMP + diphosphate. The chain is Glycine--tRNA ligase beta subunit from Streptococcus agalactiae serotype V (strain ATCC BAA-611 / 2603 V/R).